A 369-amino-acid chain; its full sequence is Erythronate-4-phosphate dehydrogenase (369 aa).

2 residues coordinate substrate: Ser-45 and Thr-66. Asp-146 lines the NAD(+) pocket. The active site involves Arg-209. An NAD(+)-binding site is contributed by Asp-233. The active site involves Glu-238. His-255 acts as the Proton donor in catalysis. Gly-258 provides a ligand contact to NAD(+).

The protein belongs to the D-isomer specific 2-hydroxyacid dehydrogenase family. PdxB subfamily. As to quaternary structure, homodimer.

It localises to the cytoplasm. The enzyme catalyses 4-phospho-D-erythronate + NAD(+) = (R)-3-hydroxy-2-oxo-4-phosphooxybutanoate + NADH + H(+). The protein operates within cofactor biosynthesis; pyridoxine 5'-phosphate biosynthesis; pyridoxine 5'-phosphate from D-erythrose 4-phosphate: step 2/5. Functionally, catalyzes the oxidation of erythronate-4-phosphate to 3-hydroxy-2-oxo-4-phosphonooxybutanoate. The polypeptide is Erythronate-4-phosphate dehydrogenase (Porphyromonas gingivalis (strain ATCC BAA-308 / W83)).